The sequence spans 323 residues: Thiamine-monophosphate kinase (323 aa).

Positions 30, 45, 46, and 47 each coordinate Mg(2+). Histidine 54 contacts substrate. Mg(2+) is bound by residues aspartate 75 and aspartate 122. ATP-binding positions include 121-122 and arginine 146; that span reads GD. A Mg(2+)-binding site is contributed by aspartate 212. Position 214 (serine 214) interacts with ATP. Aspartate 215 lines the Mg(2+) pocket. Residues glutamate 263 and phenylalanine 319 each coordinate substrate.

Belongs to the thiamine-monophosphate kinase family.

The catalysed reaction is thiamine phosphate + ATP = thiamine diphosphate + ADP. The protein operates within cofactor biosynthesis; thiamine diphosphate biosynthesis; thiamine diphosphate from thiamine phosphate: step 1/1. Its function is as follows. Catalyzes the ATP-dependent phosphorylation of thiamine-monophosphate (TMP) to form thiamine-pyrophosphate (TPP), the active form of vitamin B1. This Buchnera aphidicola subsp. Acyrthosiphon pisum (strain APS) (Acyrthosiphon pisum symbiotic bacterium) protein is Thiamine-monophosphate kinase.